The sequence spans 360 residues: Phospho-N-acetylmuramoyl-pentapeptide-transferase (360 aa).

A run of 10 helical transmembrane segments spans residues 27–47, 73–93, 94–114, 132–152, 168–188, 199–219, 236–256, 263–283, 288–308, and 338–358; these read IVSLLTALVISLWMGPHMIAW, TMGGVMILVAIIVSVLMWANL, SNPYVWCVLLVLAGYGAVGFV, WKYFWQSVIALVVAFSMYAIG, VMPQLGLLYVALAYFVIVGTS, GLAIMPTVFVAAGFALVAWAT, ASELVIVCTAIVGAGLGFLWF, VFMGDVGSLALGGALGTIAVL, FLLVIMGGVFVVETLSVILQV, and VIVRFWIISLMLVLIGLATLK.

It belongs to the glycosyltransferase 4 family. MraY subfamily. The cofactor is Mg(2+).

The protein resides in the cell inner membrane. The enzyme catalyses UDP-N-acetyl-alpha-D-muramoyl-L-alanyl-gamma-D-glutamyl-meso-2,6-diaminopimeloyl-D-alanyl-D-alanine + di-trans,octa-cis-undecaprenyl phosphate = di-trans,octa-cis-undecaprenyl diphospho-N-acetyl-alpha-D-muramoyl-L-alanyl-D-glutamyl-meso-2,6-diaminopimeloyl-D-alanyl-D-alanine + UMP. Its pathway is cell wall biogenesis; peptidoglycan biosynthesis. Catalyzes the initial step of the lipid cycle reactions in the biosynthesis of the cell wall peptidoglycan: transfers peptidoglycan precursor phospho-MurNAc-pentapeptide from UDP-MurNAc-pentapeptide onto the lipid carrier undecaprenyl phosphate, yielding undecaprenyl-pyrophosphoryl-MurNAc-pentapeptide, known as lipid I. The sequence is that of Phospho-N-acetylmuramoyl-pentapeptide-transferase from Pectobacterium carotovorum subsp. carotovorum (strain PC1).